Consider the following 74-residue polypeptide: Histone H1.C8/H1.M1 (74 aa).

The tract at residues 1–74 (MSDAAVPPKK…KAVKKAPKKK (74 aa)) is disordered. A compositionally biased stretch (basic residues) spans 11 to 74 (ASPKKAAAKK…KAVKKAPKKK (64 aa)).

Its subcellular location is the nucleus. It is found in the chromosome. The sequence is that of Histone H1.C8/H1.M1 from Trypanosoma cruzi.